A 196-amino-acid chain; its full sequence is Dephospho-CoA kinase (196 aa).

A DPCK domain is found at I5–L196. A13 to T18 provides a ligand contact to ATP.

This sequence belongs to the CoaE family.

Its subcellular location is the cytoplasm. The catalysed reaction is 3'-dephospho-CoA + ATP = ADP + CoA + H(+). Its pathway is cofactor biosynthesis; coenzyme A biosynthesis; CoA from (R)-pantothenate: step 5/5. Functionally, catalyzes the phosphorylation of the 3'-hydroxyl group of dephosphocoenzyme A to form coenzyme A. The chain is Dephospho-CoA kinase from Nostoc sp. (strain PCC 7120 / SAG 25.82 / UTEX 2576).